The primary structure comprises 1410 residues: DNA-directed RNA polymerase subunit beta' (1410 aa).

Zn(2+) is bound by residues Cys69, Cys71, Cys84, and Cys87. Residues Asp461, Asp463, and Asp465 each coordinate Mg(2+). Residues Cys810, Cys884, Cys891, and Cys894 each coordinate Zn(2+).

It belongs to the RNA polymerase beta' chain family. As to quaternary structure, the RNAP catalytic core consists of 2 alpha, 1 beta, 1 beta' and 1 omega subunit. When a sigma factor is associated with the core the holoenzyme is formed, which can initiate transcription. Mg(2+) serves as cofactor. It depends on Zn(2+) as a cofactor.

The enzyme catalyses RNA(n) + a ribonucleoside 5'-triphosphate = RNA(n+1) + diphosphate. DNA-dependent RNA polymerase catalyzes the transcription of DNA into RNA using the four ribonucleoside triphosphates as substrates. This Ehrlichia chaffeensis (strain ATCC CRL-10679 / Arkansas) protein is DNA-directed RNA polymerase subunit beta'.